Here is a 579-residue protein sequence, read N- to C-terminus: MRFKELAELFEELEKTTSHREIVRKISEFFKNLRGDEVKDSAYLFLGSTGPAFENTTLGIKDMLAIRAIAGAYGVTREDVRKRYARTGDLGDVAFELSKKRESSLTIEDVFQRLLQIRETSGKGSQEEKTALFSDILQKATPEEGKYIVRLVLGRLRLGFGDQFLLEAFAIAFTGDKKHAAKIKESYSVCTDIGELAKILAENGARATGFISIKPGRPVKSMLSQRVESFEELEKRVKGKKAAEEKYDGERVQVHKTGEGIKAFSRRLEDITSQYPEIIEDVRKTVPANEIVLDGEIVAYAELERNGNRIEEFYPFQNLMQRRRKYEIENYRKKCPVAVFFFDILYLNGEPLLKRPYPERRALLEMNVVESGIIRLSKRIVTESVEEIEDFFNETIEKGLEGIVVKSMSSNSYYEAGKRSWFWFKWKQEYSEGMRETFDLVVVGSYYGRGRRKGSFGALLCAVLNKEGQRFETLTKVGTGFTEADAEEINRLLSDHIVSEIPKGVSIKKGMLPDIFIEPAVVIEVLGSEITNSPGHTAGEGEEETGLALRFPRFLRIRHDKTPYDAMTVKEVRDLKDGT.

E244 serves as a coordination point for ATP. The active-site N6-AMP-lysine intermediate is K246. Residues R251, R266, E296, F342, R419, and K425 each coordinate ATP.

Belongs to the ATP-dependent DNA ligase family. Mg(2+) is required as a cofactor.

The catalysed reaction is ATP + (deoxyribonucleotide)n-3'-hydroxyl + 5'-phospho-(deoxyribonucleotide)m = (deoxyribonucleotide)n+m + AMP + diphosphate.. Functionally, DNA ligase that seals nicks in double-stranded DNA during DNA replication, DNA recombination and DNA repair. This chain is DNA ligase 1, found in Methanosarcina mazei (strain ATCC BAA-159 / DSM 3647 / Goe1 / Go1 / JCM 11833 / OCM 88) (Methanosarcina frisia).